The sequence spans 176 residues: NAD(P)H-quinone oxidoreductase subunit 6, chloroplastic (176 aa).

The next 5 membrane-spanning stretches (helical) occupy residues Phe-10–Pro-30, Pro-32–Leu-52, Ala-61–Met-81, Leu-92–Met-112, and Phe-152–Ser-172.

The protein belongs to the complex I subunit 6 family. In terms of assembly, NDH is composed of at least 16 different subunits, 5 of which are encoded in the nucleus.

Its subcellular location is the plastid. It is found in the chloroplast thylakoid membrane. The catalysed reaction is a plastoquinone + NADH + (n+1) H(+)(in) = a plastoquinol + NAD(+) + n H(+)(out). It catalyses the reaction a plastoquinone + NADPH + (n+1) H(+)(in) = a plastoquinol + NADP(+) + n H(+)(out). Functionally, NDH shuttles electrons from NAD(P)H:plastoquinone, via FMN and iron-sulfur (Fe-S) centers, to quinones in the photosynthetic chain and possibly in a chloroplast respiratory chain. The immediate electron acceptor for the enzyme in this species is believed to be plastoquinone. Couples the redox reaction to proton translocation, and thus conserves the redox energy in a proton gradient. This is NAD(P)H-quinone oxidoreductase subunit 6, chloroplastic (ndhG) from Nasturtium officinale (Watercress).